A 1291-amino-acid polypeptide reads, in one-letter code: DNA-directed RNA polymerase subunit beta (1291 aa).

Belongs to the RNA polymerase beta chain family. In terms of assembly, the RNAP catalytic core consists of 2 alpha, 1 beta, 1 beta' and 1 omega subunit. When a sigma factor is associated with the core the holoenzyme is formed, which can initiate transcription.

It catalyses the reaction RNA(n) + a ribonucleoside 5'-triphosphate = RNA(n+1) + diphosphate. In terms of biological role, DNA-dependent RNA polymerase catalyzes the transcription of DNA into RNA using the four ribonucleoside triphosphates as substrates. The polypeptide is DNA-directed RNA polymerase subunit beta (Cytophaga hutchinsonii (strain ATCC 33406 / DSM 1761 / CIP 103989 / NBRC 15051 / NCIMB 9469 / D465)).